The chain runs to 100 residues: Large ribosomal subunit protein bL21 (100 aa).

It belongs to the bacterial ribosomal protein bL21 family. In terms of assembly, part of the 50S ribosomal subunit. Contacts protein L20.

In terms of biological role, this protein binds to 23S rRNA in the presence of protein L20. In Rhodospirillum rubrum (strain ATCC 11170 / ATH 1.1.1 / DSM 467 / LMG 4362 / NCIMB 8255 / S1), this protein is Large ribosomal subunit protein bL21.